Consider the following 738-residue polypeptide: Multifunctional procollagen lysine hydroxylase and glycosyltransferase LH3 (738 aa).

The first 24 residues, 1-24, serve as a signal peptide directing secretion; sequence MTSSGPGPRFLLLLPLLLPPAASA. Positions 25–290 are required for glycosyltransferase activity; it reads SDRPRGRDPV…FCNQDRRTLP (266 aa). 44-46 contributes to the UDP binding site; it reads VAT. N-linked (GlcNAc...) asparagine glycosylation is present at N63. Mn(2+) contacts are provided by D112, D115, and H253. 112–114 contacts UDP; it reads DSY. 256 to 259 lines the UDP pocket; that stretch reads GPTK. Disulfide bonds link C279–C282 and C379–C385. The segment at 295–520 is accessory region; it reads PPRVFLAVFV…EFGRLLATSR (226 aa). An N-linked (GlcNAc...) asparagine glycan is attached at N548. The cysteines at positions 563 and 698 are disulfide-linked. Positions 599 and 656 each coordinate 2-oxoglutarate. A Fe2OG dioxygenase domain is found at 647 to 738; the sequence is RAVMNFVVRY…RYIMVSFVDP (92 aa). The Fe cation site is built by H667 and D669. The tract at residues 672–715 is important for dimerization; that stretch reads TFTLNVALNHKGLDYEGGGCRFLRYDCVISSPRKGWALLHPGRL. N676 contacts 2-oxoglutarate. H719 is a Fe cation binding site. R729 is a 2-oxoglutarate binding site.

Homodimer. It depends on Fe(2+) as a cofactor. Requires L-ascorbate as cofactor. Mn(2+) is required as a cofactor.

Its subcellular location is the rough endoplasmic reticulum. It is found in the endoplasmic reticulum lumen. It localises to the endoplasmic reticulum membrane. The protein resides in the secreted. The protein localises to the extracellular space. The enzyme catalyses L-lysyl-[collagen] + 2-oxoglutarate + O2 = (5R)-5-hydroxy-L-lysyl-[collagen] + succinate + CO2. The catalysed reaction is (5R)-5-hydroxy-L-lysyl-[collagen] + UDP-alpha-D-galactose = (5R)-5-O-(beta-D-galactosyl)-5-hydroxy-L-lysyl-[collagen] + UDP + H(+). It catalyses the reaction (5R)-5-O-(beta-D-galactosyl)-5-hydroxy-L-lysyl-[collagen] + UDP-alpha-D-glucose = (5R)-5-O-[alpha-D-glucosyl-(1-&gt;2)-beta-D-galactosyl]-5-hydroxy-L-lysyl-[collagen] + UDP + H(+). Multifunctional enzyme that catalyzes a series of post-translational modifications on Lys residues in procollagen. Plays a redundant role in catalyzing the formation of hydroxylysine residues in -Xaa-Lys-Gly- sequences in collagens. Plays a redundant role in catalyzing the transfer of galactose onto hydroxylysine groups, giving rise to galactosyl 5-hydroxylysine. Has an essential role by catalyzing the subsequent transfer of glucose moieties, giving rise to 1,2-glucosylgalactosyl-5-hydroxylysine residues. Catalyzes hydroxylation and glycosylation of Lys residues in the MBL1 collagen-like domain, giving rise to hydroxylysine and 1,2-glucosylgalactosyl-5-hydroxylysine residues. Catalyzes hydroxylation and glycosylation of Lys residues in the ADIPOQ collagen-like domain, giving rise to hydroxylysine and 1,2-glucosylgalactosyl-5-hydroxylysine residues. Essential for normal biosynthesis and secretion of type IV collagens. Essential for normal formation of basement membranes. The chain is Multifunctional procollagen lysine hydroxylase and glycosyltransferase LH3 (PLOD3) from Pongo abelii (Sumatran orangutan).